Reading from the N-terminus, the 106-residue chain is Urease subunit beta (106 aa).

It belongs to the urease beta subunit family. In terms of assembly, heterotrimer of UreA (gamma), UreB (beta) and UreC (alpha) subunits. Three heterotrimers associate to form the active enzyme.

The protein resides in the cytoplasm. It carries out the reaction urea + 2 H2O + H(+) = hydrogencarbonate + 2 NH4(+). It functions in the pathway nitrogen metabolism; urea degradation; CO(2) and NH(3) from urea (urease route): step 1/1. The chain is Urease subunit beta from Prochlorococcus marinus (strain AS9601).